Reading from the N-terminus, the 139-residue chain is Putative truncated protein trichome birefringence-like 46 (139 aa).

Belongs to the PC-esterase family. TBL subfamily.

The chain is Putative truncated protein trichome birefringence-like 46 (TBL46) from Arabidopsis thaliana (Mouse-ear cress).